The sequence spans 50 residues: Inducible serine protease inhibitor 1 (50 aa).

The tract at residues 1 to 27 (DLVXGTNFXKNNPXSTRVAANSXRSPS) is disordered. The span at 8–25 (FXKNNPXSTRVAANSXRS) shows a compositional bias: polar residues.

In terms of biological role, inhibits trypsin and the toxin protease PR2 of M.anisopliae. Does not inhibit chymotrypsin, subtilisin Carlsberg, proteinase K, porcine pancreatic elastase and the toxin protease PR1 of M.anisopliae. In Galleria mellonella (Greater wax moth), this protein is Inducible serine protease inhibitor 1.